The chain runs to 126 residues: C-type natriuretic peptide (126 aa).

A signal peptide spans M1–A23. The interval P20 to L71 is disordered. A propeptide spanning residues K24 to R73 is cleaved from the precursor. Gly residues predominate over residues A46–A62. A disulfide bond links C110 and C126.

The protein belongs to the natriuretic peptide family. In terms of processing, degraded by IDE (in vitro).

The protein resides in the secreted. Hormone which plays a role in endochondral ossification through regulation of cartilaginous growth plate chondrocytes proliferation and differentiation. May also be vasoactive and natriuretic. Acts by specifically binding and stimulating NPR2 to produce cGMP. Binds the clearance receptor NPR3. The protein is C-type natriuretic peptide (NPPC) of Bos taurus (Bovine).